Reading from the N-terminus, the 573-residue chain is Transcription factor E3 (573 aa).

A Phosphoserine; by MTOR modification is found at S47. Residues 91–151 (TLSASSSAEG…SPAPASPAIS (61 aa)) form a disordered region. Residues 107-126 (SSSSSSRVLLRQQLMRAQAQ) show a composition bias toward low complexity. Residues 127–136 (EQERRERREQ) are compositionally biased toward basic and acidic residues. Positions 137 to 151 (ASSFPSPAPASPAIS) are enriched in low complexity. Residue R186 is modified to Asymmetric dimethylarginine. A disordered region spans residues 209–248 (LASQALTPPPGGASVQPLPTPEAAHAPGPTSSAPNSPMAL). The segment at 258–269 (EIDDVIDEIISL) is strong transcription activation domain. S319 is subject to Phosphoserine; by MTOR. K337 participates in a covalent cross-link: Glycyl lysine isopeptide (Lys-Gly) (interchain with G-Cter in SUMO2). Positions 344–397 (QKKDNHNLIERRRRFNINDRIKELGTLIPKSSDPEMRWNKGTILKASVDYIRKL) constitute a bHLH domain. Positions 354–357 (RRRR) match the Nuclear localization signal motif. The segment at 407-428 (LESRQRSLEQANRSLQLRIQEL) is leucine-zipper. A disordered region spans residues 531–573 (VGGLSGGTLSPLRAASDPLLSSVSPAVSKASSRRSSFSMEEES). A compositionally biased stretch (low complexity) spans 537-573 (GTLSPLRAASDPLLSSVSPAVSKASSRRSSFSMEEES). 6 positions are modified to phosphoserine: S540, S546, S552, S554, S558, and S566.

Belongs to the MiT/TFE family. Homodimer and heterodimer; with TFEB or MITF. Interacts with RRAGC/RagC GDP-bound and RRAGD/RagD GDP-bound; promoting its recruitment to lysosomal membrane in the presence of nutrients. In terms of processing, phosphorylation ar Ser-47 and Ser-319 by MTOR via non-canonical mTORC1 pathway regulates its stability and subcellular location, respectively. When nutrients are present, phosphorylation by MTOR at Ser-47 promotes ubiquitination by the SCF(BTRC) complex, followed by degradation. When nutrients are present, phosphorylation by MTOR at Ser-319 also promotes association with 14-3-3/YWHA adapters and retention in the cytosol. Phosphorylation at Ser-47 plays a more critical role than phosphorylation at Ser-319 for TFE3 inactivation. Inhibition of mTORC1, starvation and lysosomal disruption, promotes dephosphorylation and transcription factor activity. Ubiquitinated by the SCF(BTRC) and SCF(FBXW11) complexes following phosphorylation at Ser-47 by MTOR, leading to its degradation by the proteasome. Post-translationally, sumoylated; does not affect dimerization with MITF.

The protein localises to the cytoplasm. Its subcellular location is the cytosol. The protein resides in the nucleus. It is found in the lysosome membrane. In terms of biological role, transcription factor that acts as a master regulator of lysosomal biogenesis and immune response. Specifically recognizes and binds E-box sequences (5'-CANNTG-3'); efficient DNA-binding requires dimerization with itself or with another MiT/TFE family member such as TFEB or MITF. Involved in the cellular response to amino acid availability by acting downstream of MTOR: in the presence of nutrients, TFE3 phosphorylation by MTOR promotes its inactivation. Upon starvation or lysosomal stress, inhibition of MTOR induces TFE3 dephosphorylation, resulting in transcription factor activity. Specifically recognizes and binds the CLEAR-box sequence (5'-GTCACGTGAC-3') present in the regulatory region of many lysosomal genes, leading to activate their expression, thereby playing a central role in expression of lysosomal genes. Maintains the pluripotent state of embryonic stem cells by promoting the expression of genes such as ESRRB; mTOR-dependent TFE3 cytosolic retention and inactivation promotes exit from pluripotency. Required to maintain the naive pluripotent state of hematopoietic stem cell; mTOR-dependent cytoplasmic retention of TFE3 promotes the exit of hematopoietic stem cell from pluripotency. TFE3 activity is also involved in the inhibition of neuronal progenitor differentiation. Acts as a positive regulator of browning of adipose tissue by promoting expression of target genes; mTOR-dependent phosphorylation promotes cytoplasmic retention of TFE3 and inhibits browning of adipose tissue. In association with TFEB, activates the expression of CD40L in T-cells, thereby playing a role in T-cell-dependent antibody responses in activated CD4(+) T-cells and thymus-dependent humoral immunity. Specifically recognizes the MUE3 box, a subset of E-boxes, present in the immunoglobulin enhancer. It also binds very well to a USF/MLTF site. May regulate lysosomal positioning in response to nutrient deprivation by promoting the expression of PIP4P1. The protein is Transcription factor E3 of Bos taurus (Bovine).